The primary structure comprises 394 residues: ATP phosphoribosyltransferase regulatory subunit (394 aa).

The protein belongs to the class-II aminoacyl-tRNA synthetase family. HisZ subfamily. As to quaternary structure, heteromultimer composed of HisG and HisZ subunits.

Its subcellular location is the cytoplasm. It functions in the pathway amino-acid biosynthesis; L-histidine biosynthesis; L-histidine from 5-phospho-alpha-D-ribose 1-diphosphate: step 1/9. Its function is as follows. Required for the first step of histidine biosynthesis. May allow the feedback regulation of ATP phosphoribosyltransferase activity by histidine. The protein is ATP phosphoribosyltransferase regulatory subunit of Pseudomonas aeruginosa (strain LESB58).